The following is a 579-amino-acid chain: Isocitrate dehydrogenase kinase/phosphatase (579 aa).

ATP contacts are provided by residues 324-330 (ADGTPGM) and Lys345. Residue Asp380 is part of the active site.

It belongs to the AceK family.

The protein localises to the cytoplasm. The catalysed reaction is L-seryl-[isocitrate dehydrogenase] + ATP = O-phospho-L-seryl-[isocitrate dehydrogenase] + ADP + H(+). Its function is as follows. Bifunctional enzyme which can phosphorylate or dephosphorylate isocitrate dehydrogenase (IDH) on a specific serine residue. This is a regulatory mechanism which enables bacteria to bypass the Krebs cycle via the glyoxylate shunt in response to the source of carbon. When bacteria are grown on glucose, IDH is fully active and unphosphorylated, but when grown on acetate or ethanol, the activity of IDH declines drastically concomitant with its phosphorylation. The protein is Isocitrate dehydrogenase kinase/phosphatase of Xanthomonas axonopodis pv. citri (strain 306).